The primary structure comprises 137 residues: Large ribosomal subunit protein uL16 (137 aa).

The protein belongs to the universal ribosomal protein uL16 family. In terms of assembly, part of the 50S ribosomal subunit.

Its function is as follows. Binds 23S rRNA and is also seen to make contacts with the A and possibly P site tRNAs. This Acinetobacter baumannii (strain SDF) protein is Large ribosomal subunit protein uL16.